Reading from the N-terminus, the 181-residue chain is Inner membrane-spanning protein YciB (181 aa).

The next 5 membrane-spanning stretches (helical) occupy residues 10–30, 50–70, 72–92, 118–138, and 148–168; these read LIIF…GALI, MHLI…VFHD, AFIK…LGVS, VTWY…YVAF, and FKVF…VFYL.

Belongs to the YciB family.

It is found in the cell inner membrane. Plays a role in cell envelope biogenesis, maintenance of cell envelope integrity and membrane homeostasis. The sequence is that of Inner membrane-spanning protein YciB from Shewanella sp. (strain MR-7).